Consider the following 307-residue polypeptide: UDP-3-O-acyl-N-acetylglucosamine deacetylase (307 aa).

Zn(2+) contacts are provided by His-78, His-241, and Asp-245. His-268 acts as the Proton donor in catalysis.

This sequence belongs to the LpxC family. The cofactor is Zn(2+).

It catalyses the reaction a UDP-3-O-[(3R)-3-hydroxyacyl]-N-acetyl-alpha-D-glucosamine + H2O = a UDP-3-O-[(3R)-3-hydroxyacyl]-alpha-D-glucosamine + acetate. It functions in the pathway glycolipid biosynthesis; lipid IV(A) biosynthesis; lipid IV(A) from (3R)-3-hydroxytetradecanoyl-[acyl-carrier-protein] and UDP-N-acetyl-alpha-D-glucosamine: step 2/6. Catalyzes the hydrolysis of UDP-3-O-myristoyl-N-acetylglucosamine to form UDP-3-O-myristoylglucosamine and acetate, the committed step in lipid A biosynthesis. The chain is UDP-3-O-acyl-N-acetylglucosamine deacetylase from Acidovorax sp. (strain JS42).